Here is a 363-residue protein sequence, read N- to C-terminus: Diheme-cytochrome-encapsulin shell fusion protein (363 aa).

Residues 1–36 form the signal peptide; it reads MVMGILNTFKKVYAVTGFFALLAVFSLSQVGSSAFA. Residues 37 to 74 form a diheme c-type cytochrome region; it reads ACAKVDDCFSCHTTQELNAVHKNTPYQGQSCIVCHKAF. Heme is bound by residues Cys44, Cys47, His48, Cys67, Cys70, and His71. Residues 75-94 form a linker region; sequence AADDTCSDAKDGRFAKISSE. Residues 95–363 form an encapsulin domain region; sequence ININKEDWNK…KCPQAICTLE (269 aa).

It belongs to the encapsulin family. Family 1 subfamily. In terms of assembly, the encapsulin nanocompartment is probably formed by 180 monomers, with the N-terminus (diheme domain) inside. There are 36 pores where the pentamers meet as well as 3-fold axis channels and dimer channels. It depends on heme as a cofactor.

It localises to the encapsulin nanocompartment. Fusion of the shell and cargo protein of a type 1 encapsulin nanocompartment. Protein missing its signal peptide makes 33 nm particles in E.coli (called cEnc), protein missing its signal peptide and diheme domain (residues 1-86, called Enc) makes 29 nm particles. The cEnc nancompartment encloses c-type heme. The cargo protein NIR-HAO (AC P0DV45) is probably targeted to the nanocompartment by its association with the diheme domain in cEnc; removal of the diheme domain in Enc halves the amount of cargo. The sequence is that of Diheme-cytochrome-encapsulin shell fusion protein from Kuenenia stuttgartiensis.